Here is a 124-residue protein sequence, read N- to C-terminus: MNKVKFYVLFTALLSSLCAHGAPQSITELCSEYHNTQIYTINDKILSYTESMAGKREMVIITFKSGATFQVEVPGSQHIDSQKKAIERMKDTLRITYLTETKIDKLCVWNNKTPNSIAAISMEN.

Residues 1-21 form the signal peptide; it reads MNKVKFYVLFTALLSSLCAHG. An intrachain disulfide couples cysteine 30 to cysteine 107.

In terms of assembly, heterohexamer of one A chain and of five B chains.

In terms of biological role, the biological activity of the toxin is produced by the A chain, which activates intracellular adenyl cyclase. The polypeptide is Heat-labile enterotoxin B chain (eltB) (Escherichia coli).